The following is a 399-amino-acid chain: Chorismate synthase (399 aa).

The disordered stretch occupies residues I41–Q72. Residue R48 participates in NADP(+) binding. Residues R125–S127, G288, H303–S307, and R330 each bind FMN. 2 stretches are compositionally biased toward basic and acidic residues: residues P363–Y377 and A389–D399. The disordered stretch occupies residues P363–D399.

This sequence belongs to the chorismate synthase family. FMNH2 serves as cofactor.

It carries out the reaction 5-O-(1-carboxyvinyl)-3-phosphoshikimate = chorismate + phosphate. It participates in metabolic intermediate biosynthesis; chorismate biosynthesis; chorismate from D-erythrose 4-phosphate and phosphoenolpyruvate: step 7/7. Catalyzes the anti-1,4-elimination of the C-3 phosphate and the C-6 proR hydrogen from 5-enolpyruvylshikimate-3-phosphate (EPSP) to yield chorismate, which is the branch point compound that serves as the starting substrate for the three terminal pathways of aromatic amino acid biosynthesis. This reaction introduces a second double bond into the aromatic ring system. This is Chorismate synthase from Haloarcula marismortui (strain ATCC 43049 / DSM 3752 / JCM 8966 / VKM B-1809) (Halobacterium marismortui).